Reading from the N-terminus, the 148-residue chain is Translation initiation factor 2 subunit beta (148 aa).

It belongs to the eIF-2-beta/eIF-5 family. Heterotrimer composed of an alpha, a beta and a gamma chain.

In terms of biological role, eIF-2 functions in the early steps of protein synthesis by forming a ternary complex with GTP and initiator tRNA. The protein is Translation initiation factor 2 subunit beta (eif2b) of Aeropyrum pernix (strain ATCC 700893 / DSM 11879 / JCM 9820 / NBRC 100138 / K1).